Here is a 249-residue protein sequence, read N- to C-terminus: MGPHGKQSVLRMPLLLLLTCVQSGTGLESINYAPQLLGATLEGRLTQSTFTLEQPLGQFKNVNLSDPDPIWLVVAHSNAAQNFTAPRKVEDRHAPANFDRNGYYLTLRANRVHYKGGQPDSQLRVLRVGNDNNCSLESQGCNSPLPGAGPYRVKFLAMSAEGPVAETLWSEEIYLQQAQTFREAPGSQGKGTVVIIAFLSILLAILLVVFLVLVISACLSTSGSSPEEQVRMRHYHTHHMGSLRAERSS.

The signal sequence occupies residues Met1 to Gly26. Residues Leu27–Val194 lie on the Extracellular side of the membrane. N-linked (GlcNAc...) asparagine glycans are attached at residues Asn63, Asn82, and Asn133. Residues Ile195–Ile215 traverse the membrane as a helical segment. The Cytoplasmic segment spans residues Ser216–Ser249.

The protein belongs to the uroplakin-3 family.

Its subcellular location is the membrane. The sequence is that of Uroplakin-3b-like protein 1 from Mus musculus (Mouse).